A 168-amino-acid chain; its full sequence is Phosphopantetheine adenylyltransferase (168 aa).

A substrate-binding site is contributed by threonine 10. Residues 10 to 11 and histidine 18 each bind ATP; that span reads TF. Substrate contacts are provided by lysine 42, leucine 74, and arginine 88. ATP contacts are provided by residues 89–91, glutamate 99, and 124–130; these read GLR and NSFISST.

The protein belongs to the bacterial CoaD family. As to quaternary structure, homohexamer. Mg(2+) is required as a cofactor.

It is found in the cytoplasm. It catalyses the reaction (R)-4'-phosphopantetheine + ATP + H(+) = 3'-dephospho-CoA + diphosphate. The protein operates within cofactor biosynthesis; coenzyme A biosynthesis; CoA from (R)-pantothenate: step 4/5. Its function is as follows. Reversibly transfers an adenylyl group from ATP to 4'-phosphopantetheine, yielding dephospho-CoA (dPCoA) and pyrophosphate. In Shewanella denitrificans (strain OS217 / ATCC BAA-1090 / DSM 15013), this protein is Phosphopantetheine adenylyltransferase.